The primary structure comprises 316 residues: MADAVNSNSKEEAAQLPDGVSSVIPGWFSEISPMWPGEAHSLKVEKILFQGKSDYQNVMVFQSSTYGKVLVLDGVIQLTERDECAYQEMIAHLPLCSIPSPKKVLVIGGGDGGVLREVARHLSVEQIDICEIDKMVVDVSKQFFPDVAVGFEDPRVVLHIGDGVAFLKAVPEGTYDAIIVDSSDPIGPAQELFEKPFFESVAKALRPGGVVCTQAESIWLHMHIIEDIVANCRQIFKGSVNYAWTTVPTYPSGVIGFMLCSTEGPPVDFKHPINPIDANDGRSKTMKPLKFYNSEIHSAAFCLPSFAKKVIDSKAN.

The PABS domain maps to 25–262; the sequence is PGWFSEISPM…GVIGFMLCST (238 aa). Glutamine 56 contacts S-adenosyl 3-(methylsulfanyl)propylamine. Tyrosine 86 lines the putrescine pocket. S-adenosyl 3-(methylsulfanyl)propylamine-binding positions include glutamine 87, aspartate 111, glutamate 131, 162–163, and aspartate 181; that span reads DG. The active-site Proton acceptor is aspartate 181. Putrescine is bound by residues 181–184 and tyrosine 250; that span reads DSSD.

The protein belongs to the spermidine/spermine synthase family.

The catalysed reaction is S-adenosyl 3-(methylsulfanyl)propylamine + putrescine = S-methyl-5'-thioadenosine + spermidine + H(+). It functions in the pathway amine and polyamine biosynthesis; spermidine biosynthesis; spermidine from putrescine: step 1/1. The protein is Spermidine synthase of Coffea arabica (Arabian coffee).